The sequence spans 219 residues: GTP-binding protein drn-1 (219 aa).

GTP is bound by residues 37–44, 56–62, 85–89, 146–149, and 177–178; these read GAGGVGKS, NENYVPT, DTTGS, NKKD, and AK. The Effector region motif lies at 59–67; the sequence is YVPTIEDTY. At C216 the chain carries Cysteine methyl ester. C216 carries the S-geranylgeranyl cysteine lipid modification. Residues 217–219 constitute a propeptide, removed in mature form; sequence HIM.

It belongs to the small GTPase superfamily. Di-Ras family. In terms of assembly, interacts with epac-1 (via C-terminus). In terms of tissue distribution, expressed specifically in neurons including the nerve ring, ventral and dorsal nerve cord motor neurons and tail ganglia.

Its subcellular location is the cell membrane. Its function is as follows. Displays low GTPase activity and exists predominantly in the GTP-bound form. Together with epac-1, may regulate acetylcholine release at the neuromuscular junctions probably downstream of G-protein gsa-1 and adenylate cyclase acy-1. The protein is GTP-binding protein drn-1 of Caenorhabditis elegans.